A 136-amino-acid polypeptide reads, in one-letter code: MSNSSPETVSQPSQEVKYGEREIAEGQLITFPNPRVGRRYDINITLPEFTCKCPFSGYPDFATIYITYVPDERVVELKALKLYINSYRDRYISHEESANQILDDFVAACDPLEANVKADFTPRGNVHTVVEVRHTK.

Cys53 (thioimide intermediate) is an active-site residue. Catalysis depends on Asp60, which acts as the Proton donor. Residues Val75–Leu77 and His94–Glu95 contribute to the substrate site.

This sequence belongs to the GTP cyclohydrolase I family. QueF type 1 subfamily.

The protein localises to the cytoplasm. The catalysed reaction is 7-aminomethyl-7-carbaguanine + 2 NADP(+) = 7-cyano-7-deazaguanine + 2 NADPH + 3 H(+). Its pathway is tRNA modification; tRNA-queuosine biosynthesis. In terms of biological role, catalyzes the NADPH-dependent reduction of 7-cyano-7-deazaguanine (preQ0) to 7-aminomethyl-7-deazaguanine (preQ1). The polypeptide is NADPH-dependent 7-cyano-7-deazaguanine reductase (Nostoc sp. (strain PCC 7120 / SAG 25.82 / UTEX 2576)).